The sequence spans 541 residues: Cytochrome P450 monooxygenase claU (541 aa).

A helical membrane pass occupies residues 12–32 (VIDTLVILFSTWAFLGLIRVI). Residue C480 coordinates heme.

It belongs to the cytochrome P450 family. It depends on heme as a cofactor.

The protein resides in the membrane. It functions in the pathway secondary metabolite biosynthesis; terpenoid biosynthesis. Its function is as follows. Cytochrome P450 monooxygenase; part of the gene cluster that mediates the biosynthesis of clavilactone A, a meroterpenoid that features a unique benzo-fused ten-membered carbocyclic ring unit with an alpha,beta-epoxy-gamma-lactone moiety, forming an intriguing 10/5/3 tricyclic nested skeleton. Cytochrome P450 monooxygenases claO, claP, claQ, claU, and claW are close orthologs, suggesting that a redundant function or pseudogenes are present in the cla cluster. These monoxygenases are not involved in clavilactone A biosynthesis nor its modification. ClaR, ClaS and ClaT are sufficient to produce clavilactone A. The biosynthesis begins with the prenyltransferase claS that transfers geranyl pyrophosphate (GPP) to hydroquinone to produces geranylhydroquinone. The cytochrome P450 monooxygenase claR then catalyzes the diradical coupling reaction between the intramolecular hydroquinone and allyl moieties to form the benzo-fused ten-membered carbocyclic ring unit of wigantol. Finally the cytochrome P450 monooxygenase claT exquisitely and stereoselectively assembles the alpha,beta-epoxy-gamma-lactone moiety, producing clavilactone A via arnebinol A. In Ampulloclitocybe clavipes (Club foot), this protein is Cytochrome P450 monooxygenase claU.